We begin with the raw amino-acid sequence, 729 residues long: Fatty acid oxidation complex subunit alpha (729 aa).

The tract at residues 1 to 189 (MLYKGDTLYL…KIGLVDGVVK (189 aa)) is enoyl-CoA hydratase/isomerase. Asp296 is a substrate binding site. The segment at 311–729 (ETPKQAAVLG…ARPVGDLKTA (419 aa)) is 3-hydroxyacyl-CoA dehydrogenase. Residues Met324, Asp343, 400-402 (VVE), Lys407, and Ser429 contribute to the NAD(+) site. The active-site For 3-hydroxyacyl-CoA dehydrogenase activity is the His450. Asn453 lines the NAD(+) pocket. Residues Asn500 and Tyr660 each contribute to the substrate site. The interval 708–729 (RHNEPYYPPVEPARPVGDLKTA) is disordered.

In the N-terminal section; belongs to the enoyl-CoA hydratase/isomerase family. This sequence in the C-terminal section; belongs to the 3-hydroxyacyl-CoA dehydrogenase family. As to quaternary structure, heterotetramer of two alpha chains (FadB) and two beta chains (FadA).

It catalyses the reaction a (3S)-3-hydroxyacyl-CoA + NAD(+) = a 3-oxoacyl-CoA + NADH + H(+). It carries out the reaction a (3S)-3-hydroxyacyl-CoA = a (2E)-enoyl-CoA + H2O. The catalysed reaction is a 4-saturated-(3S)-3-hydroxyacyl-CoA = a (3E)-enoyl-CoA + H2O. The enzyme catalyses (3S)-3-hydroxybutanoyl-CoA = (3R)-3-hydroxybutanoyl-CoA. It catalyses the reaction a (3Z)-enoyl-CoA = a 4-saturated (2E)-enoyl-CoA. It carries out the reaction a (3E)-enoyl-CoA = a 4-saturated (2E)-enoyl-CoA. The protein operates within lipid metabolism; fatty acid beta-oxidation. In terms of biological role, involved in the aerobic and anaerobic degradation of long-chain fatty acids via beta-oxidation cycle. Catalyzes the formation of 3-oxoacyl-CoA from enoyl-CoA via L-3-hydroxyacyl-CoA. It can also use D-3-hydroxyacyl-CoA and cis-3-enoyl-CoA as substrate. The polypeptide is Fatty acid oxidation complex subunit alpha (Escherichia coli (strain UTI89 / UPEC)).